The following is a 23-amino-acid chain: Coenzyme PQQ synthesis protein A (23 aa).

The pyrroloquinoline quinone (Glu-Tyr) cross-link spans E15 to Y19.

The protein belongs to the PqqA family.

The protein operates within cofactor biosynthesis; pyrroloquinoline quinone biosynthesis. Functionally, required for coenzyme pyrroloquinoline quinone (PQQ) biosynthesis. PQQ is probably formed by cross-linking a specific glutamate to a specific tyrosine residue and excising these residues from the peptide. In Ectopseudomonas mendocina (strain ymp) (Pseudomonas mendocina), this protein is Coenzyme PQQ synthesis protein A.